Consider the following 252-residue polypeptide: Imidazole glycerol phosphate synthase subunit HisF (252 aa).

Catalysis depends on residues Asp-11 and Asp-130.

Belongs to the HisA/HisF family. Heterodimer of HisH and HisF.

The protein resides in the cytoplasm. It catalyses the reaction 5-[(5-phospho-1-deoxy-D-ribulos-1-ylimino)methylamino]-1-(5-phospho-beta-D-ribosyl)imidazole-4-carboxamide + L-glutamine = D-erythro-1-(imidazol-4-yl)glycerol 3-phosphate + 5-amino-1-(5-phospho-beta-D-ribosyl)imidazole-4-carboxamide + L-glutamate + H(+). The protein operates within amino-acid biosynthesis; L-histidine biosynthesis; L-histidine from 5-phospho-alpha-D-ribose 1-diphosphate: step 5/9. Functionally, IGPS catalyzes the conversion of PRFAR and glutamine to IGP, AICAR and glutamate. The HisF subunit catalyzes the cyclization activity that produces IGP and AICAR from PRFAR using the ammonia provided by the HisH subunit. This chain is Imidazole glycerol phosphate synthase subunit HisF, found in Persephonella marina (strain DSM 14350 / EX-H1).